The sequence spans 248 residues: 3-deoxy-manno-octulosonate cytidylyltransferase (248 aa).

It belongs to the KdsB family.

Its subcellular location is the cytoplasm. It catalyses the reaction 3-deoxy-alpha-D-manno-oct-2-ulosonate + CTP = CMP-3-deoxy-beta-D-manno-octulosonate + diphosphate. It participates in nucleotide-sugar biosynthesis; CMP-3-deoxy-D-manno-octulosonate biosynthesis; CMP-3-deoxy-D-manno-octulosonate from 3-deoxy-D-manno-octulosonate and CTP: step 1/1. Its pathway is bacterial outer membrane biogenesis; lipopolysaccharide biosynthesis. Its function is as follows. Activates KDO (a required 8-carbon sugar) for incorporation into bacterial lipopolysaccharide in Gram-negative bacteria. The chain is 3-deoxy-manno-octulosonate cytidylyltransferase from Salmonella dublin (strain CT_02021853).